A 314-amino-acid polypeptide reads, in one-letter code: Peroxidase 2 (314 aa).

The N-terminal stretch at 1–23 is a signal peptide; it reads MASASSVSLMLLVAAAMASAASA. Gln-24 carries the pyrrolidone carboxylic acid modification. 4 disulfide bridges follow: Cys-34–Cys-109, Cys-67–Cys-72, Cys-115–Cys-310, and Cys-194–Cys-219. Catalysis depends on His-65, which acts as the Proton acceptor. Residues Asp-66, Val-69, Gly-71, Asp-73, and Ser-75 each contribute to the Ca(2+) site. N-linked (GlcNAc...) asparagine glycosylation occurs at Asn-148. Pro-157 provides a ligand contact to substrate. Asn-169 carries N-linked (GlcNAc...) asparagine glycosylation. His-187 contributes to the heme b binding site. Thr-188 is a binding site for Ca(2+). N-linked (GlcNAc...) asparagine glycosylation occurs at Asn-203. Positions 234, 237, and 242 each coordinate Ca(2+). Asn-274 and Asn-309 each carry an N-linked (GlcNAc...) asparagine glycan.

It belongs to the peroxidase family. Classical plant (class III) peroxidase subfamily. Ca(2+) is required as a cofactor. Requires heme b as cofactor.

Its subcellular location is the secreted. The catalysed reaction is 2 a phenolic donor + H2O2 = 2 a phenolic radical donor + 2 H2O. In terms of biological role, removal of H(2)O(2), oxidation of toxic reductants, biosynthesis and degradation of lignin, suberization, auxin catabolism, response to environmental stresses such as wounding, pathogen attack and oxidative stress. These functions might be dependent on each isozyme/isoform in each plant tissue. The polypeptide is Peroxidase 2 (PRX112) (Oryza sativa subsp. japonica (Rice)).